Consider the following 372-residue polypeptide: tRNA pseudouridine synthase D (372 aa).

Asp85 acts as the Nucleophile in catalysis. One can recognise a TRUD domain in the interval 160–330; the sequence is GFANYFGYQR…MQGSRRFMWG (171 aa).

Belongs to the pseudouridine synthase TruD family.

It carries out the reaction uridine(13) in tRNA = pseudouridine(13) in tRNA. Responsible for synthesis of pseudouridine from uracil-13 in transfer RNAs. This is tRNA pseudouridine synthase D from Campylobacter jejuni subsp. jejuni serotype O:6 (strain 81116 / NCTC 11828).